A 340-amino-acid polypeptide reads, in one-letter code: Glycerol-3-phosphate dehydrogenase [NAD(P)+] (340 aa).

4 residues coordinate NADPH: serine 11, tryptophan 12, arginine 33, and lysine 106. Sn-glycerol 3-phosphate-binding residues include lysine 106, glycine 137, and serine 139. Residue alanine 141 coordinates NADPH. Residues lysine 192, aspartate 245, serine 255, arginine 256, and asparagine 257 each contribute to the sn-glycerol 3-phosphate site. The active-site Proton acceptor is the lysine 192. Arginine 256 contacts NADPH. Residues valine 280 and glutamate 282 each coordinate NADPH.

It belongs to the NAD-dependent glycerol-3-phosphate dehydrogenase family.

The protein resides in the cytoplasm. It carries out the reaction sn-glycerol 3-phosphate + NAD(+) = dihydroxyacetone phosphate + NADH + H(+). The enzyme catalyses sn-glycerol 3-phosphate + NADP(+) = dihydroxyacetone phosphate + NADPH + H(+). It participates in membrane lipid metabolism; glycerophospholipid metabolism. In terms of biological role, catalyzes the reduction of the glycolytic intermediate dihydroxyacetone phosphate (DHAP) to sn-glycerol 3-phosphate (G3P), the key precursor for phospholipid synthesis. The chain is Glycerol-3-phosphate dehydrogenase [NAD(P)+] from Bacillus cereus (strain 03BB102).